The sequence spans 320 residues: 4-hydroxy-3-methylbut-2-enyl diphosphate reductase 2 (320 aa).

[4Fe-4S] cluster is bound at residue Cys-18. (2E)-4-hydroxy-3-methylbut-2-enyl diphosphate is bound by residues His-47 and His-81. Dimethylallyl diphosphate contacts are provided by His-47 and His-81. Isopentenyl diphosphate contacts are provided by His-47 and His-81. Cys-103 is a [4Fe-4S] cluster binding site. A (2E)-4-hydroxy-3-methylbut-2-enyl diphosphate-binding site is contributed by His-131. Dimethylallyl diphosphate is bound at residue His-131. His-131 serves as a coordination point for isopentenyl diphosphate. The active-site Proton donor is Glu-133. Thr-172 lines the (2E)-4-hydroxy-3-methylbut-2-enyl diphosphate pocket. Cys-202 is a [4Fe-4S] cluster binding site. (2E)-4-hydroxy-3-methylbut-2-enyl diphosphate-binding residues include Ser-230, Ser-231, Asn-232, and Ser-275. Positions 230, 231, 232, and 275 each coordinate dimethylallyl diphosphate. Ser-230, Ser-231, Asn-232, and Ser-275 together coordinate isopentenyl diphosphate.

Belongs to the IspH family. Requires [4Fe-4S] cluster as cofactor.

It catalyses the reaction isopentenyl diphosphate + 2 oxidized [2Fe-2S]-[ferredoxin] + H2O = (2E)-4-hydroxy-3-methylbut-2-enyl diphosphate + 2 reduced [2Fe-2S]-[ferredoxin] + 2 H(+). The enzyme catalyses dimethylallyl diphosphate + 2 oxidized [2Fe-2S]-[ferredoxin] + H2O = (2E)-4-hydroxy-3-methylbut-2-enyl diphosphate + 2 reduced [2Fe-2S]-[ferredoxin] + 2 H(+). It participates in isoprenoid biosynthesis; dimethylallyl diphosphate biosynthesis; dimethylallyl diphosphate from (2E)-4-hydroxy-3-methylbutenyl diphosphate: step 1/1. The protein operates within isoprenoid biosynthesis; isopentenyl diphosphate biosynthesis via DXP pathway; isopentenyl diphosphate from 1-deoxy-D-xylulose 5-phosphate: step 6/6. Its function is as follows. Catalyzes the conversion of 1-hydroxy-2-methyl-2-(E)-butenyl 4-diphosphate (HMBPP) into a mixture of isopentenyl diphosphate (IPP) and dimethylallyl diphosphate (DMAPP). Acts in the terminal step of the DOXP/MEP pathway for isoprenoid precursor biosynthesis. This is 4-hydroxy-3-methylbut-2-enyl diphosphate reductase 2 from Rhodopseudomonas palustris (strain ATCC BAA-98 / CGA009).